The following is a 402-amino-acid chain: Dual-specificity RNA methyltransferase RlmN (402 aa).

Catalysis depends on Glu-94, which acts as the Proton acceptor. A Radical SAM core domain is found at 100 to 351 (EDDRGTLCIS…ATVRKTRGDD (252 aa)). Cysteines 107 and 356 form a disulfide. 3 residues coordinate [4Fe-4S] cluster: Cys-114, Cys-118, and Cys-121. Residues 182–183 (GE), Ser-214, 236–238 (SLH), and Asn-313 contribute to the S-adenosyl-L-methionine site. The active-site S-methylcysteine intermediate is the Cys-356.

This sequence belongs to the radical SAM superfamily. RlmN family. [4Fe-4S] cluster is required as a cofactor.

The protein localises to the cytoplasm. The catalysed reaction is adenosine(2503) in 23S rRNA + 2 reduced [2Fe-2S]-[ferredoxin] + 2 S-adenosyl-L-methionine = 2-methyladenosine(2503) in 23S rRNA + 5'-deoxyadenosine + L-methionine + 2 oxidized [2Fe-2S]-[ferredoxin] + S-adenosyl-L-homocysteine. It carries out the reaction adenosine(37) in tRNA + 2 reduced [2Fe-2S]-[ferredoxin] + 2 S-adenosyl-L-methionine = 2-methyladenosine(37) in tRNA + 5'-deoxyadenosine + L-methionine + 2 oxidized [2Fe-2S]-[ferredoxin] + S-adenosyl-L-homocysteine. Its function is as follows. Specifically methylates position 2 of adenine 2503 in 23S rRNA and position 2 of adenine 37 in tRNAs. m2A2503 modification seems to play a crucial role in the proofreading step occurring at the peptidyl transferase center and thus would serve to optimize ribosomal fidelity. In Polynucleobacter asymbioticus (strain DSM 18221 / CIP 109841 / QLW-P1DMWA-1) (Polynucleobacter necessarius subsp. asymbioticus), this protein is Dual-specificity RNA methyltransferase RlmN.